Reading from the N-terminus, the 138-residue chain is ATP synthase epsilon chain (138 aa).

It belongs to the ATPase epsilon chain family. As to quaternary structure, F-type ATPases have 2 components, CF(1) - the catalytic core - and CF(0) - the membrane proton channel. CF(1) has five subunits: alpha(3), beta(3), gamma(1), delta(1), epsilon(1). CF(0) has three main subunits: a, b and c.

It is found in the cell inner membrane. In terms of biological role, produces ATP from ADP in the presence of a proton gradient across the membrane. The sequence is that of ATP synthase epsilon chain from Geotalea daltonii (strain DSM 22248 / JCM 15807 / FRC-32) (Geobacter daltonii).